The following is a 431-amino-acid chain: Glutamate-1-semialdehyde 2,1-aminomutase (431 aa).

Lys269 carries the N6-(pyridoxal phosphate)lysine modification.

The protein belongs to the class-III pyridoxal-phosphate-dependent aminotransferase family. HemL subfamily. As to quaternary structure, homodimer. Pyridoxal 5'-phosphate serves as cofactor.

It localises to the cytoplasm. The enzyme catalyses (S)-4-amino-5-oxopentanoate = 5-aminolevulinate. It functions in the pathway porphyrin-containing compound metabolism; protoporphyrin-IX biosynthesis; 5-aminolevulinate from L-glutamyl-tRNA(Glu): step 2/2. The protein operates within porphyrin-containing compound metabolism; chlorophyll biosynthesis. The polypeptide is Glutamate-1-semialdehyde 2,1-aminomutase (Chlorobium phaeovibrioides (strain DSM 265 / 1930) (Prosthecochloris vibrioformis (strain DSM 265))).